The following is a 275-amino-acid chain: T-cell ecto-ADP-ribosyltransferase 1 (275 aa).

The signal sequence occupies residues 1–20 (MPSNICKFFLTWWLIQQVTG). 2 disulfides stabilise this stretch: C41/C243 and C141/C193. An N-linked (GlcNAc...) asparagine glycan is attached at N58. Residues 61–238 (EKLKVAWEEA…IFLDSPKRKK (178 aa)) form the TR mART core domain. Positions 98, 146, and 164 each coordinate NAD(+). Residue R146 is part of the active site. S167 is a catalytic residue. Position 202 (S202) interacts with NAD(+). E209 is a catalytic residue. A lipid anchor (GPI-anchor amidated serine) is attached at S246. A propeptide spans 247–275 (SAGTRESCVSLFLVVLTSLLVQLLCLAEP) (removed in mature form).

Belongs to the Arg-specific ADP-ribosyltransferase family. As to expression, postthymic T-cells.

Its subcellular location is the cell membrane. It carries out the reaction L-arginyl-[protein] + NAD(+) = N(omega)-(ADP-D-ribosyl)-L-arginyl-[protein] + nicotinamide + H(+). The catalysed reaction is NAD(+) + H2O = ADP-D-ribose + nicotinamide + H(+). In terms of biological role, has NAD(+) glycohydrolase activity and extremely low ADP-ribosyltransferase activity. The chain is T-cell ecto-ADP-ribosyltransferase 1 (Art2a) from Rattus norvegicus (Rat).